Reading from the N-terminus, the 272-residue chain is Shikimate dehydrogenase (NADP(+)) (272 aa).

Shikimate is bound by residues 14-16 and T61; that span reads SKS. The active-site Proton acceptor is K65. E77 contacts NADP(+). Shikimate contacts are provided by N86 and D102. Residues 126-130, 149-154, and M213 each bind NADP(+); these read GAGGA and NRTVSR. Residue Y215 coordinates shikimate. G237 is a binding site for NADP(+).

It belongs to the shikimate dehydrogenase family. In terms of assembly, homodimer.

It catalyses the reaction shikimate + NADP(+) = 3-dehydroshikimate + NADPH + H(+). Its pathway is metabolic intermediate biosynthesis; chorismate biosynthesis; chorismate from D-erythrose 4-phosphate and phosphoenolpyruvate: step 4/7. Its function is as follows. Involved in the biosynthesis of the chorismate, which leads to the biosynthesis of aromatic amino acids. Catalyzes the reversible NADPH linked reduction of 3-dehydroshikimate (DHSA) to yield shikimate (SA). The polypeptide is Shikimate dehydrogenase (NADP(+)) (Shigella sonnei (strain Ss046)).